The chain runs to 193 residues: Pyridoxal 5'-phosphate synthase subunit PdxT (193 aa).

48–50 (GES) provides a ligand contact to L-glutamine. Cys80 (nucleophile) is an active-site residue. Residues Arg109 and 137-138 (IR) each bind L-glutamine. Catalysis depends on charge relay system residues His173 and Glu175.

The protein belongs to the glutaminase PdxT/SNO family. As to quaternary structure, in the presence of PdxS, forms a dodecamer of heterodimers. Only shows activity in the heterodimer.

It catalyses the reaction aldehydo-D-ribose 5-phosphate + D-glyceraldehyde 3-phosphate + L-glutamine = pyridoxal 5'-phosphate + L-glutamate + phosphate + 3 H2O + H(+). The catalysed reaction is L-glutamine + H2O = L-glutamate + NH4(+). It participates in cofactor biosynthesis; pyridoxal 5'-phosphate biosynthesis. In terms of biological role, catalyzes the hydrolysis of glutamine to glutamate and ammonia as part of the biosynthesis of pyridoxal 5'-phosphate. The resulting ammonia molecule is channeled to the active site of PdxS. In Mycobacteroides abscessus (strain ATCC 19977 / DSM 44196 / CCUG 20993 / CIP 104536 / JCM 13569 / NCTC 13031 / TMC 1543 / L948) (Mycobacterium abscessus), this protein is Pyridoxal 5'-phosphate synthase subunit PdxT.